Reading from the N-terminus, the 135-residue chain is Retinol-binding protein 1 (135 aa).

The tract at residues 22 to 32 (RALDVNVALRK) is important for interaction with STRA6. 3 residues coordinate all-trans-retinol: K41, M63, and Q109.

Belongs to the calycin superfamily. Fatty-acid binding protein (FABP) family. In terms of assembly, interacts (only as retinol-free apoprotein) with STRA6.

It is found in the cytoplasm. The protein resides in the lipid droplet. In terms of biological role, cytoplasmic retinol-binding protein. Accepts retinol from the transport protein STRA6, and thereby contributes to retinol uptake, storage and retinoid homeostasis. The protein is Retinol-binding protein 1 (RBP1) of Bos taurus (Bovine).